The chain runs to 73 residues: MAVFEKVQDIIVDELGKEKEEVTLETSFEELDADSLDLFQIINDIEDEFDVEVDTEADMKTVADLVKYVENNK.

The 73-residue stretch at 1 to 73 (MAVFEKVQDI…DLVKYVENNK (73 aa)) folds into the Carrier domain. At Ser-35 the chain carries O-(pantetheine 4'-phosphoryl)serine.

Belongs to the acyl carrier protein (ACP) family. 4'-phosphopantetheine is transferred from CoA to a specific serine of apo-ACP by AcpS. This modification is essential for activity because fatty acids are bound in thioester linkage to the sulfhydryl of the prosthetic group.

Its subcellular location is the cytoplasm. Its pathway is lipid metabolism; fatty acid biosynthesis. Its function is as follows. Carrier of the growing fatty acid chain in fatty acid biosynthesis. This chain is Acyl carrier protein, found in Lactococcus lactis subsp. lactis (strain IL1403) (Streptococcus lactis).